The chain runs to 502 residues: MSKTLKIIQKKKSLEKELYTRKKKLKKLKKLGFNFPNTFHYIHTIKEIKKLYNNYTKKELEKINYKTKISGRIVNKRTFGKALFFVIRNNNHDIQIYIKSNYFPKNYYQKNILELDLGDIIGVKGKIFKTNTCELSILCKKIYLLTKSLRSLPDKYFGLKNQEIKYRKRYLDLISNNKIIKIFQKRSLIISNIRSFMKQKKFLEVETPMLHPIPGGANAKPFITYHNSLNEKMYLRIAPELYLKKLIIGGFNKIFEINRNFRNEGISTKHNPEFTMMEIYMSYSNYIDIMNLLEELCIFLVKKISKSLIIMYKSKKINFKKPIKKMTMIESILKFNKNIDISNFKNIKNIKKTATNLNIKIDSNASLGEITNLIFEKTTEKKIIQPTFITEYPIEISPLAKEKNKYFAERFEFFIAGYEIANGFSELNDPEEQKKRFKLQISKKNYTDKSKNFSYDKDYIIALEHGLPPTSGLGVGIDRLIMILTNQKTIKDIIFFPLLKKI.

Mg(2+) contacts are provided by glutamate 412 and glutamate 419.

It belongs to the class-II aminoacyl-tRNA synthetase family. Homodimer. The cofactor is Mg(2+).

The protein localises to the cytoplasm. It carries out the reaction tRNA(Lys) + L-lysine + ATP = L-lysyl-tRNA(Lys) + AMP + diphosphate. The protein is Lysine--tRNA ligase of Buchnera aphidicola subsp. Cinara cedri (strain Cc).